The primary structure comprises 351 residues: Methylthioribose-1-phosphate isomerase (351 aa).

Residues 51–53, Arg94, and Gln199 each bind substrate; that span reads RGA. The active-site Proton donor is Asp240. 250 to 251 contributes to the substrate binding site; the sequence is NK.

The protein belongs to the eIF-2B alpha/beta/delta subunits family. MtnA subfamily. In terms of assembly, homodimer.

The enzyme catalyses 5-(methylsulfanyl)-alpha-D-ribose 1-phosphate = 5-(methylsulfanyl)-D-ribulose 1-phosphate. The protein operates within amino-acid biosynthesis; L-methionine biosynthesis via salvage pathway; L-methionine from S-methyl-5-thio-alpha-D-ribose 1-phosphate: step 1/6. Its function is as follows. Catalyzes the interconversion of methylthioribose-1-phosphate (MTR-1-P) into methylthioribulose-1-phosphate (MTRu-1-P). This Bacillus cereus (strain ATCC 10987 / NRS 248) protein is Methylthioribose-1-phosphate isomerase.